A 43-amino-acid chain; its full sequence is Hemolysin H3C (43 aa).

Residue Met1 is modified to N-formylmethionine.

The protein belongs to the staphylococcal hemolytic protein family.

Its subcellular location is the secreted. Functionally, virulence factor. Causes hemolysis of erythrocytes from sheep (HD(50)=2.63 mM), rabbit (HD(50)=2.37 mM), guinea pig (HD(50)=1.98 mM), dog (HD(50)=1.02 mM) and human (HD(50)=2.07 mM). Acts synergistically with beta-hemolysins from S.aureus ATCC 25923. Cytotoxic towards human dermal fibroblasts. The protein is Hemolysin H3C of Staphylococcus cohnii subsp. cohnii.